A 103-amino-acid polypeptide reads, in one-letter code: Protein RALF-like 18 (103 aa).

Residues 1–32 (MMNNMKLLIIAVMIISAALLPALVVGSRPVKC) form the signal peptide. Positions 33–58 (DNCMDGGEKEEIMKMSSGVDVSHRIL) are cleaved as a propeptide — removed in mature form. A disulfide bridge connects residues Cys-92 and Cys-98.

Belongs to the plant rapid alkalinization factor (RALF) family. Post-translationally, proteolytically cleaved, probably by S1P, a subtilisin-like serine protease (subtilase).

It is found in the secreted. Cell signaling peptide that may regulate plant stress, growth, and development. Mediates a rapid alkalinization of extracellular space by mediating a transient increase in the cytoplasmic Ca(2+) concentration leading to a calcium-dependent signaling events through a cell surface receptor and a concomitant activation of some intracellular mitogen-activated protein kinases. This Arabidopsis thaliana (Mouse-ear cress) protein is Protein RALF-like 18 (RALFL18).